A 253-amino-acid chain; its full sequence is Phosphate import ATP-binding protein PstB (253 aa).

The ABC transporter domain occupies 7–249 (ASAKNLNLWY…PQSSKTKRYI (243 aa)). 39–46 (GPSGCGKS) is an ATP binding site.

It belongs to the ABC transporter superfamily. Phosphate importer (TC 3.A.1.7) family. The complex is composed of two ATP-binding proteins (PstB), two transmembrane proteins (PstC and PstA) and a solute-binding protein (PstS).

Its subcellular location is the cell inner membrane. It catalyses the reaction phosphate(out) + ATP + H2O = ADP + 2 phosphate(in) + H(+). Functionally, part of the ABC transporter complex PstSACB involved in phosphate import. Responsible for energy coupling to the transport system. The polypeptide is Phosphate import ATP-binding protein PstB (Ehrlichia ruminantium (strain Gardel)).